We begin with the raw amino-acid sequence, 216 residues long: Orotidine 5'-phosphate decarboxylase (216 aa).

Substrate is bound by residues aspartate 12, lysine 34, 62–71 (DFKVADIDAT), serine 119, 172–182 (PGVGFQGGNAK), glycine 194, and arginine 195. Residue lysine 64 is the Proton donor of the active site.

This sequence belongs to the OMP decarboxylase family. Type 1 subfamily. Homodimer.

The enzyme catalyses orotidine 5'-phosphate + H(+) = UMP + CO2. Its pathway is pyrimidine metabolism; UMP biosynthesis via de novo pathway; UMP from orotate: step 2/2. In terms of biological role, catalyzes the decarboxylation of orotidine 5'-monophosphate (OMP) to uridine 5'-monophosphate (UMP). The sequence is that of Orotidine 5'-phosphate decarboxylase from Methanosphaera stadtmanae (strain ATCC 43021 / DSM 3091 / JCM 11832 / MCB-3).